A 621-amino-acid chain; its full sequence is UvrABC system protein C (621 aa).

The 80-residue stretch at Glu13 to Ile92 folds into the GIY-YIG domain. The UVR domain maps to Asn204–Ile239.

The protein belongs to the UvrC family. In terms of assembly, interacts with UvrB in an incision complex.

The protein localises to the cytoplasm. Its function is as follows. The UvrABC repair system catalyzes the recognition and processing of DNA lesions. UvrC both incises the 5' and 3' sides of the lesion. The N-terminal half is responsible for the 3' incision and the C-terminal half is responsible for the 5' incision. This is UvrABC system protein C from Clostridium novyi (strain NT).